A 199-amino-acid chain; its full sequence is Inosine triphosphate pyrophosphatase (199 aa).

12-17 contacts ITP; sequence TGNAKK. E42 is a Mg(2+) binding site. ITP-binding positions include K54, 70–71, K87, 146–149, K169, and 174–175; these read DT, FGWD, and HR.

This sequence belongs to the HAM1 NTPase family. In terms of assembly, homodimer. Mg(2+) is required as a cofactor. Mn(2+) serves as cofactor.

It localises to the cytoplasm. The catalysed reaction is ITP + H2O = IMP + diphosphate + H(+). It catalyses the reaction dITP + H2O = dIMP + diphosphate + H(+). The enzyme catalyses XTP + H2O = XMP + diphosphate + H(+). In terms of biological role, pyrophosphatase that hydrolyzes non-canonical purine nucleotides such as inosine triphosphate (ITP), deoxyinosine triphosphate (dITP) or xanthosine 5'-triphosphate (XTP) to their respective monophosphate derivatives. The enzyme does not distinguish between the deoxy- and ribose forms. Probably excludes non-canonical purines from RNA and DNA precursor pools, thus preventing their incorporation into RNA and DNA and avoiding chromosomal lesions. The protein is Inosine triphosphate pyrophosphatase of Monosiga brevicollis (Choanoflagellate).